A 190-amino-acid polypeptide reads, in one-letter code: Small ribosomal subunit protein uS4 (190 aa).

Positions 105 to 181 (RRLQTLVYKL…RKKAKAAEGG (77 aa)) constitute an S4 RNA-binding domain. The segment at 163-190 (GGGRPGRVRRKKAKAAEGGDGDAEEDEE) is disordered. Residues 181 to 190 (GDGDAEEDEE) show a composition bias toward acidic residues.

Belongs to the universal ribosomal protein uS4 family.

In Podospora anserina (Pleurage anserina), this protein is Small ribosomal subunit protein uS4 (RPS9).